The chain runs to 339 residues: MSVLERIIRGSDLDREEARDLMCRIVGGELSDVEVAGILVALRCKGYTSEELVGFVDGMMEHAVKVDPDVERLVDTAGTGGDELDTFNASTLAGLTAAAAGVPVAKHGNRSVTSECGSADILEALGVNIEADPDTVKRCIEEVGFGFMFAPKFHPAMKNVMPVRRKLGIRTVFNVLGPLTNPARERVTGQVIGVYSENLLDLVAGALAELGVRRGLVVYGLDGVDELSVTCENEVVYVDDGEVTDRDTVAPEDVGLDRADPKDVAGADPETSAEEARKILGGELPVDHPKVQMTAFNAGAALYVGEAVDSLEKGIQRALDVLEEGRALEVLEKVVDLSS.

5-phospho-alpha-D-ribose 1-diphosphate contacts are provided by residues glycine 78, 81-82 (GD), threonine 86, 88-91 (NAST), 106-114 (KHGNRSVTS), and serine 118. Glycine 78 contacts anthranilate. Residue serine 90 coordinates Mg(2+). Residue asparagine 109 participates in anthranilate binding. Arginine 164 contacts anthranilate. Aspartate 225 and glutamate 226 together coordinate Mg(2+). Residues 248 to 265 (TVAPEDVGLDRADPKDVA) show a composition bias toward basic and acidic residues. Residues 248–271 (TVAPEDVGLDRADPKDVAGADPET) form a disordered region.

The protein belongs to the anthranilate phosphoribosyltransferase family. Homodimer. Mg(2+) is required as a cofactor.

It carries out the reaction N-(5-phospho-beta-D-ribosyl)anthranilate + diphosphate = 5-phospho-alpha-D-ribose 1-diphosphate + anthranilate. It functions in the pathway amino-acid biosynthesis; L-tryptophan biosynthesis; L-tryptophan from chorismate: step 2/5. Its function is as follows. Catalyzes the transfer of the phosphoribosyl group of 5-phosphorylribose-1-pyrophosphate (PRPP) to anthranilate to yield N-(5'-phosphoribosyl)-anthranilate (PRA). This is Anthranilate phosphoribosyltransferase from Methanopyrus kandleri (strain AV19 / DSM 6324 / JCM 9639 / NBRC 100938).